Consider the following 446-residue polypeptide: Chromosomal replication initiator protein DnaA (446 aa).

The domain I, interacts with DnaA modulators stretch occupies residues 1 to 81 (MENISDLWNS…AKLAIRFIIP (81 aa)). The segment at 81–109 (PQSQAEEDIDLPSVKQKHAHDESNHLPQS) is domain II. The interval 110–326 (MLNPKYTFDT…GALIRVVAYS (217 aa)) is domain III, AAA+ region. Residues glycine 154, glycine 156, lysine 157, and threonine 158 each coordinate ATP. The segment at 327 to 446 (SLINKDMNAD…HVEEVKDILK (120 aa)) is domain IV, binds dsDNA.

It belongs to the DnaA family. As to quaternary structure, oligomerizes as a right-handed, spiral filament on DNA at oriC.

It localises to the cytoplasm. Its function is as follows. Plays an essential role in the initiation and regulation of chromosomal replication. ATP-DnaA binds to the origin of replication (oriC) to initiate formation of the DNA replication initiation complex once per cell cycle. Binds the DnaA box (a 9 base pair repeat at the origin) and separates the double-stranded (ds)DNA. Forms a right-handed helical filament on oriC DNA; dsDNA binds to the exterior of the filament while single-stranded (ss)DNA is stabiized in the filament's interior. The ATP-DnaA-oriC complex binds and stabilizes one strand of the AT-rich DNA unwinding element (DUE), permitting loading of DNA polymerase. After initiation quickly degrades to an ADP-DnaA complex that is not apt for DNA replication. Binds acidic phospholipids. The chain is Chromosomal replication initiator protein DnaA from Bacillus mycoides (strain KBAB4) (Bacillus weihenstephanensis).